We begin with the raw amino-acid sequence, 92 residues long: Phospholemman (92 aa).

A signal peptide spans 1-20 (MAPLHHILVLCVGFLTTATA). Over 21 to 35 (EAPQEHDPFTYDYQS) the chain is Extracellular. Residues 36 to 56 (LRIGGLIIAGILFILGILIVL) traverse the membrane as a helical segment. The Cytoplasmic segment spans residues 57 to 92 (SRRCRCKFNQQQRTGEPDEEEGTFRSSIRRLSTRRR). A lipid anchor (S-palmitoyl cysteine) is attached at Cys-60. Position 62 is an S-glutathionyl cysteine; alternate (Cys-62). The S-palmitoyl cysteine; alternate moiety is linked to residue Cys-62. Residues 65–92 (NQQQRTGEPDEEEGTFRSSIRRLSTRRR) are disordered. Phosphothreonine is present on Thr-79. A Phosphoserine modification is found at Ser-82. Phosphoserine; by PKA and PKC occurs at positions 83 and 88. Residues 83–92 (SIRRLSTRRR) show a composition bias toward basic residues. Thr-89 is subject to Phosphothreonine; by PKC.

It belongs to the FXYD family. As to quaternary structure, homotetramer. Monomer. Regulatory subunit of the sodium/potassium-transporting ATPase (NKA) which is composed of a catalytic alpha subunit, a non-catalytic beta subunit and an additional regulatory subunit. The monomeric form associates with NKA while the oligomeric form does not. Interacts with the catalytic alpha-1 subunit ATP1A1. Also interacts with the catalytic alpha-2 and alpha-3 subunits ATP1A2 and ATP1A3. Very little interaction with the alpha subunits ATP1A1, ATP1A2 or ATP1A3 when phosphorylated at Ser-83. Interacts with non-catalytic beta-1 subunit ATP1B1. Oxidative stress decreases interaction with ATP1A1 but increases interaction with ATP1B1. In terms of processing, major plasma membrane substrate for cAMP-dependent protein kinase (PKA) and protein kinase C (PKC) in several different tissues. Phosphorylated in response to insulin and adrenergic stimulation. Phosphorylation at Ser-88 stimulates sodium/potassium-transporting ATPase activity while the unphosphorylated form inhibits sodium/potassium-transporting ATPase activity. Phosphorylation increases tetramerization, decreases binding to ATP1A1 and reduces inhibition of ATP1A1 activity. Phosphorylation at Ser-83 leads to greatly reduced interaction with ATP1A1, ATP1A2 and ATP1A3. May be phosphorylated by DMPK. Palmitoylation increases half-life and stability and is enhanced upon phosphorylation at Ser-88 by PKA. Present in heart, esophagus, stomach, aorta, skeletal muscle, smooth muscle, and liver but absent from brain and kidney.

It is found in the cell membrane. The protein resides in the sarcolemma. Its subcellular location is the apical cell membrane. The protein localises to the membrane. It localises to the caveola. It is found in the T-tubule. Its function is as follows. Associates with and regulates the activity of the sodium/potassium-transporting ATPase (NKA) which transports Na(+) out of the cell and K(+) into the cell. Inhibits NKA activity in its unphosphorylated state and stimulates activity when phosphorylated. Reduces glutathionylation of the NKA beta-1 subunit ATP1B1, thus reversing glutathionylation-mediated inhibition of ATP1B1. Contributes to female sexual development by maintaining the excitability of neurons which secrete gonadotropin-releasing hormone. The protein is Phospholemman of Canis lupus familiaris (Dog).